A 45-amino-acid chain; its full sequence is Scolopendra 20417.15 Da toxin (45 aa).

Residues 26-45 form a disordered region; that stretch reads KVANGQEAGQPGAXNMKELH.

It belongs to the CRISP family. Venom allergen 5-like subfamily. Post-translationally, contains 3 disulfide bonds. Expressed by the venom gland.

Its subcellular location is the secreted. This is Scolopendra 20417.15 Da toxin from Scolopendra viridicornis nigra (Brazilian giant centipede).